The primary structure comprises 393 residues: Cysteine protease ATG4B (393 aa).

Met-1 bears the N-acetylmethionine mark. At Ser-34 the chain carries Phosphoserine; by PKB/AKT1 and PKB/AKT2. Cys-74 functions as the Nucleophile in the catalytic mechanism. Residue Cys-189 is modified to S-nitrosocysteine. Active-site residues include Asp-278 and His-280. Cys-292 and Cys-301 each carry S-nitrosocysteine. A disulfide bridge links Cys-292 with Cys-361. Ser-316 carries the post-translational modification Phosphoserine; by ULK1. Phosphoserine; by STK26 is present on Ser-383. The short motif at 388–391 is the LIR element; that stretch reads FEIL. Ser-392 is subject to Phosphoserine.

Belongs to the peptidase C54 family. As to quaternary structure, interacts with PFKP; promoting phosphorylation of ATG4B at Ser-34. Interacts with GBP7. Phosphorylation at Ser-383 and Ser-392 promotes autophagy by increasing protein delipidation activity without affecting proteolytic activation of ATG8 proteins. Phosphorylation at Ser-316 by ULK1 inhibits autophagy by decreasing both proteolytic activation and delipidation activities. Phosphorylation at Ser-316 is dephosphorylated by protein phosphatase 2A (PP2A). Phosphorylation at Ser-34 by AKT2 promotes its hydrolase activity, leading to increased proteolytic activation and delipidation of ATG8 family proteins. Phosphorylation at Ser-34 by AKT1 promotes mitochondrial localization and inhibition of the F1F0-ATP synthase activity, leading to elevation of mitochondrial reactive oxygen species (ROS). In terms of processing, ubiquitinated by RNF5, leading to its degradation by the proteasome. Post-translationally, S-nitrosylation at Cys-189 and Cys-292 in response to high glucose decreases both proteolytic activation and delipidation activities. O-glycosylated by OGT, leading to increase protease activity, thereby promoting the proteolytic activation of ATG8 family proteins. In terms of processing, forms reversible intrachain disulfide bonds in response to oxidative stress. Forms interchain disulfide bonds, leading to formation of homooligomers in response to oxidation.

It localises to the cytoplasm. Its subcellular location is the cytosol. It is found in the cytoplasmic vesicle. The protein localises to the autophagosome. The protein resides in the endoplasmic reticulum. It localises to the mitochondrion. The enzyme catalyses [protein]-C-terminal L-amino acid-glycyl-phosphatidylethanolamide + H2O = [protein]-C-terminal L-amino acid-glycine + a 1,2-diacyl-sn-glycero-3-phosphoethanolamine. The catalysed reaction is [protein]-C-terminal L-amino acid-glycyl-phosphatidylserine + H2O = [protein]-C-terminal L-amino acid-glycine + a 1,2-diacyl-sn-glycero-3-phospho-L-serine. Its activity is regulated as follows. Inhibited by N-ethylmaleimide. Redox-regulated during autophagy since reducing conditions activate ATG4A whereas an oxidizing environment such as the presence of H(2)O(2) inhibits its activity. The cysteine protease activity compounds is inhibited by styrylquinoline compounds 4-28 and LV-320. Its function is as follows. Cysteine protease that plays a key role in autophagy by mediating both proteolytic activation and delipidation of ATG8 family proteins. Required for canonical autophagy (macroautophagy), non-canonical autophagy as well as for mitophagy. The protease activity is required for proteolytic activation of ATG8 family proteins: cleaves the C-terminal amino acid of ATG8 proteins MAP1LC3A, MAP1LC3B, MAP1LC3C, GABARAPL1, GABARAPL2 and GABARAP, to reveal a C-terminal glycine. Exposure of the glycine at the C-terminus is essential for ATG8 proteins conjugation to phosphatidylethanolamine (PE) and insertion to membranes, which is necessary for autophagy. Protease activity is also required to counteract formation of high-molecular weight conjugates of ATG8 proteins (ATG8ylation): acts as a deubiquitinating-like enzyme that removes ATG8 conjugated to other proteins, such as ATG3. In addition to the protease activity, also mediates delipidation of ATG8 family proteins. Catalyzes delipidation of PE-conjugated forms of ATG8 proteins during macroautophagy. Also involved in non-canonical autophagy, a parallel pathway involving conjugation of ATG8 proteins to single membranes at endolysosomal compartments, by catalyzing delipidation of ATG8 proteins conjugated to phosphatidylserine (PS). Compared to other members of the family (ATG4A, ATG4C or ATG4C), constitutes the major protein for proteolytic activation of ATG8 proteins, while it displays weaker delipidation activity than other ATG4 paralogs. Involved in phagophore growth during mitophagy independently of its protease activity and of ATG8 proteins: acts by regulating ATG9A trafficking to mitochondria and promoting phagophore-endoplasmic reticulum contacts during the lipid transfer phase of mitophagy. The sequence is that of Cysteine protease ATG4B from Homo sapiens (Human).